A 412-amino-acid chain; its full sequence is Interferon-inducible GTPase 5 (412 aa).

The 184-residue stretch at 51 to 234 (TRLEVGVTGE…PMLVTTWEHD (184 aa)) folds into the IRG-type G domain. Residues 60–67 (ESGAGKSS), 85–89 (TGVVE), and 215–217 (SNL) contribute to the GTP site. Phosphoserine occurs at positions 246 and 303.

It belongs to the TRAFAC class dynamin-like GTPase superfamily. IRG family. Interacts with PLIN2/ADRP and COX4I1/COXIV. In terms of tissue distribution, expressed in spermatozoa tails from the testis and epididymis, where it may be a component of the fibrous sheath (at protein level).

The protein localises to the cell projection. Its subcellular location is the cilium. The protein resides in the flagellum. It localises to the lipid droplet. It catalyses the reaction GTP + H2O = GDP + phosphate + H(+). Its function is as follows. Required for sperm motility and therefore male fertility, via positive regulation of spermatozoa fibrous sheath formation. This chain is Interferon-inducible GTPase 5, found in Mus musculus (Mouse).